The sequence spans 361 residues: 3-dehydroquinate synthase (361 aa).

Belongs to the archaeal-type DHQ synthase family.

The catalysed reaction is 2-amino-2,3,7-trideoxy-D-lyxo-hept-6-ulosonate + NAD(+) + H2O = 3-dehydroquinate + NH4(+) + NADH + H(+). Catalyzes the oxidative deamination and cyclization of 2-amino-3,7-dideoxy-D-threo-hept-6-ulosonic acid (ADH) to yield 3-dehydroquinate (DHQ), which is fed into the canonical shikimic pathway of aromatic amino acid biosynthesis. This Methanocaldococcus jannaschii (strain ATCC 43067 / DSM 2661 / JAL-1 / JCM 10045 / NBRC 100440) (Methanococcus jannaschii) protein is 3-dehydroquinate synthase (aroB').